A 126-amino-acid chain; its full sequence is Protein ApaG (126 aa).

Residues 2 to 126 (NQLAASVSVD…FRLSIPGLLH (125 aa)) enclose the ApaG domain.

The polypeptide is Protein ApaG (Shewanella pealeana (strain ATCC 700345 / ANG-SQ1)).